The sequence spans 99 residues: DNA-binding protein Fis (99 aa).

A DNA-binding region (H-T-H motif) is located at residues 75 to 94 (QTRAASIMGINRSTLRKKLK).

It belongs to the transcriptional regulatory Fis family. In terms of assembly, homodimer.

Activates ribosomal RNA transcription. Plays a direct role in upstream activation of rRNA promoters. The sequence is that of DNA-binding protein Fis from Buchnera aphidicola subsp. Schizaphis graminum (strain Sg).